We begin with the raw amino-acid sequence, 415 residues long: PRKCA-binding protein (415 aa).

The region spanning 22-105 (KVTLQKDAQN…EVTIHYNKLQ (84 aa)) is the PDZ domain. Residues cysteine 44 and cysteine 46 each contribute to the Zn(2+) site. Threonine 82 bears the Phosphothreonine mark. The AH domain maps to 144–357 (LCNDGLVKRL…CYAVLRDADV (214 aa)). The tract at residues 376-415 (EEFTDGEEEEEEEDTAAGEPSRDTRGAAGPLDKGGSWCDS) is disordered. The span at 377–391 (EFTDGEEEEEEEDTA) shows a compositional bias: acidic residues. Residue cysteine 413 is the site of S-palmitoyl cysteine; by DHHC8 attachment.

In terms of assembly, monomer and homodimer. Interacts with CXADR. Interacts presynaptically with the glutamate receptors GRIA2, GRIA3, GRIK3, isoform 3 of GRIA4, isoform A of GRM4, GRM7 and GRM8; with NAPA and NAPB; and with BTG2. The interaction with NAPA and NAPB disrupts the interaction with GRIA2, conducting to the internalization of GRIA2. Interacts with PRKCA; with the amine transporters SLC6A2 and SLC6A3; with the channels ASIC1 and ASIC2; with the GTP-binding proteins ARF1 and ARF3; with the ephrin receptor tyrosine kinases EPHA7, EPHB1 and EPHB2; with ERBB2 and through its PDZ domain with the C-terminal tail of PRLHR. Interacts with UNC5A. Interacts (via AH domain) with NCS1/FREQ; in a calcium-dependent manner. Interacts with F-actin and associates with the ARP2/3 complex. Interacts (via PDZ domain) with ARF1 (activated); the interaction blocks Arp2/3 complex inhibition. Interacts with SORCS3. Phosphorylation at Thr-82 appears to inhibit the interaction with AMPA receptors. In terms of processing, palmitoylation on Cys-413 is essential for long-term synaptic depression (LTD). In terms of tissue distribution, ubiquitous.

It localises to the cytoplasm. It is found in the perinuclear region. The protein localises to the membrane. The protein resides in the postsynaptic density. Its subcellular location is the synapse. It localises to the synaptosome. It is found in the cytoskeleton. Functionally, probable adapter protein that bind to and organize the subcellular localization of a variety of membrane proteins containing some PDZ recognition sequence. Involved in the clustering of various receptors, possibly by acting at the receptor internalization level. Plays a role in synaptic plasticity by regulating the trafficking and internalization of AMPA receptors. May be regulated upon PRKCA activation. May regulate ASIC1/ASIC3 channel. Regulates actin polymerization by inhibiting the actin-nucleating activity of the Arp2/3 complex; the function is competitive with nucleation promoting factors and is linked to neuronal morphology regulation and AMPA receptor (AMPAR) endocytosis. Via interaction with the Arp2/3 complex involved in regulation of synaptic plasicity of excitatory synapses and required for spine shrinkage during long-term depression (LTD). Involved in regulation of astrocyte morphology, antagonistic to Arp2/3 complex activator WASL/N-WASP function. The sequence is that of PRKCA-binding protein (PICK1) from Homo sapiens (Human).